We begin with the raw amino-acid sequence, 97 residues long: UPF0235 protein PFL_5841 (97 aa).

It belongs to the UPF0235 family.

In Pseudomonas fluorescens (strain ATCC BAA-477 / NRRL B-23932 / Pf-5), this protein is UPF0235 protein PFL_5841.